Consider the following 202-residue polypeptide: MKLLVATTNEGKYREIKEILSEYGIEVLKPEEKLEVEETGCTFLENAYLKARAYYERYKIPALADDSGLIVEAISPYPGVYSSRFYDIDFGGREEVRTNKDEANIRKLLRLLENTENRKAKFVAFIVVYGGSWGIFAEGEVRGEITKEPRGDRGFGYDPVFVPEGYNKTMAELSPEEKNKISHRGRALRKLVHVLKNCEKAF.

Residue 7 to 12 (TTNEGK) participates in substrate binding. 2 residues coordinate Mg(2+): E37 and D66. Catalysis depends on D66, which acts as the Proton acceptor. Substrate contacts are provided by residues S67, 155 to 158 (FGYD), K178, and 183 to 184 (HR).

This sequence belongs to the HAM1 NTPase family. Homodimer. The cofactor is Mg(2+).

The enzyme catalyses XTP + H2O = XMP + diphosphate + H(+). It carries out the reaction dITP + H2O = dIMP + diphosphate + H(+). It catalyses the reaction ITP + H2O = IMP + diphosphate + H(+). Its function is as follows. Pyrophosphatase that catalyzes the hydrolysis of nucleoside triphosphates to their monophosphate derivatives, with a high preference for the non-canonical purine nucleotides XTP (xanthosine triphosphate), dITP (deoxyinosine triphosphate) and ITP. Seems to function as a house-cleaning enzyme that removes non-canonical purine nucleotides from the nucleotide pool, thus preventing their incorporation into DNA/RNA and avoiding chromosomal lesions. The sequence is that of dITP/XTP pyrophosphatase from Aquifex aeolicus (strain VF5).